The chain runs to 506 residues: Maturase K (506 aa).

The protein belongs to the intron maturase 2 family. MatK subfamily.

The protein localises to the plastid. It localises to the chloroplast. In terms of biological role, usually encoded in the trnK tRNA gene intron. Probably assists in splicing its own and other chloroplast group II introns. In Mimosa pudica (Sensitive plant), this protein is Maturase K.